The chain runs to 205 residues: DUF724 domain-containing protein 4 (205 aa).

The disordered stretch occupies residues 28 to 59 (DASGRGKRRRVEQEHHSDLNNETAAPTGGSAG). The 127-residue stretch at 63–189 (VLPFTKTLAS…MADDYSKLKK (127 aa)) folds into the DUF724 domain.

Expressed in roots, leaves, stems, flowers and siliques.

Its subcellular location is the nucleus. Its function is as follows. May be involved in the polar growth of plant cells via transportation of RNAs. The sequence is that of DUF724 domain-containing protein 4 from Arabidopsis thaliana (Mouse-ear cress).